Reading from the N-terminus, the 566-residue chain is MVIVTDSNFLDAAGTLRKGLLYCDFVAIDFEFLGLDVSAISLHDTVESRYQILRDNVIKYRPCQLGLTLFKQKSNRAYKADTYSVPLFQRFGDNDTSISLPSMRFLVKNKFNLNQVFMDGVEFCTRKEFKKFERALLAGTAASYLSREVKSQIELLKVMVHEKCYQSTSYHITHRTDEPMQKIPLKMKPNSSVSLRMPRNLSSVEKYMIIYELTKAFPQFLFTCDEKQQNLHVKNISDDYLKEKDNLERARARCSESVKGVSAILQVVHMTGKLVVGHNSLLDAMYMYHYFFSHLPANYQMFKDKFNALFPRIMDTKLLAQALRFELPGVGDSLENLGDYFGSDKSDKTVPPELRGFIEPWMNPLEDESENVYHNAGFDSYVTGEVFLKLAHIYINRRNNFKNEILDFDRIYQYLEAPILNRLPFQLMDVGCCYLTGDDSKGFRPDVITIVRRDRVAIEEDEFRYLEKALGTLMATYQFDIEWSKNKKELFLATNSPGSYAFLCEKFSNDSSLAPLDELDSGKKWTFEQRQTAWRSFKNRGVGIGINAKRIRAQNQATKIQRAMEI.

The a divalent metal cation site is built by aspartate 29, glutamate 31, aspartate 283, and aspartate 379.

Belongs to the CAF1 family. The cofactor is a divalent metal cation. Expressed in germline cells.

It localises to the cytoplasm. In terms of biological role, involved in transcriptome surveillance. Required for piwi-interacting RNAs (piRNAs) 3'-end trimming, which is important for both fertility and piRNA-directed gene silencing. Has 3' to 5' exonuclease activity in vitro. The polypeptide is 3'-5' exoribonuclease parn-1 (Caenorhabditis elegans).